The primary structure comprises 275 residues: Dermonecrotic toxin LarSicTox-alphaIII1 (275 aa).

His5 is an active-site residue. 2 residues coordinate Mg(2+): Glu25 and Asp27. His41 acts as the Nucleophile in catalysis. Cystine bridges form between Cys45–Cys51 and Cys47–Cys190. Asp85 contacts Mg(2+). A glycan (N-linked (GlcNAc...) asparagine) is linked at Asn252.

The protein belongs to the arthropod phospholipase D family. Class II subfamily. Requires Mg(2+) as cofactor. In terms of tissue distribution, expressed by the venom gland.

The protein localises to the secreted. The enzyme catalyses an N-(acyl)-sphingosylphosphocholine = an N-(acyl)-sphingosyl-1,3-cyclic phosphate + choline. It catalyses the reaction an N-(acyl)-sphingosylphosphoethanolamine = an N-(acyl)-sphingosyl-1,3-cyclic phosphate + ethanolamine. The catalysed reaction is a 1-acyl-sn-glycero-3-phosphocholine = a 1-acyl-sn-glycero-2,3-cyclic phosphate + choline. It carries out the reaction a 1-acyl-sn-glycero-3-phosphoethanolamine = a 1-acyl-sn-glycero-2,3-cyclic phosphate + ethanolamine. In terms of biological role, dermonecrotic toxins cleave the phosphodiester linkage between the phosphate and headgroup of certain phospholipids (sphingolipid and lysolipid substrates), forming an alcohol (often choline) and a cyclic phosphate. This toxin acts on sphingomyelin (SM). It may also act on ceramide phosphoethanolamine (CPE), lysophosphatidylcholine (LPC) and lysophosphatidylethanolamine (LPE), but not on lysophosphatidylserine (LPS), and lysophosphatidylglycerol (LPG). It acts by transphosphatidylation, releasing exclusively cyclic phosphate products as second products. Induces dermonecrosis, hemolysis, increased vascular permeability, edema, inflammatory response, and platelet aggregation. The protein is Dermonecrotic toxin LarSicTox-alphaIII1 of Loxosceles arizonica (Arizona brown spider).